We begin with the raw amino-acid sequence, 733 residues long: Submandibular gland protein C (733 aa).

The signal sequence occupies residues 1 to 20; the sequence is MKLILLYLAVVLCFVGKARS. Positions 48-91 are disordered; it reads KSSGGSKDYNLSDGGKSNSRKNLSPATGGSATQQSNLDDSHAPN. An N-linked (GlcNAc...) asparagine glycan is attached at asparagine 57. Residues 62 to 84 show a composition bias toward polar residues; the sequence is GKSNSRKNLSPATGGSATQQSNL. Residues asparagine 141 and asparagine 187 are each glycosylated (N-linked (GlcNAc...) asparagine). Disordered stretches follow at residues 172 to 204, 249 to 330, 369 to 450, and 496 to 733; these read GQQA…ADKP, LTED…NSSN, and SVTE…PSVA. The span at 186 to 199 shows a compositional bias: polar residues; the sequence is ENSSLSTGSATSNK. The span at 256-270 shows a compositional bias: low complexity; the sequence is TSTSASVSGDSSTSS. The segment covering 300 to 318 has biased composition (polar residues); that stretch reads GSKQNVEDSTLSTGSATSN. A glycan (N-linked (GlcNAc...) asparagine) is linked at asparagine 327. Residues 376-390 are compositionally biased toward low complexity; it reads TSTSASVSGDSSTSS. The span at 420–438 shows a compositional bias: polar residues; it reads GSKQNVEDSTLSTGSATSN. N-linked (GlcNAc...) asparagine glycans are attached at residues asparagine 447, asparagine 514, and asparagine 528. Composition is skewed to polar residues over residues 496–516 and 525–535; these read SVTE…NNLS and NPTNGSSSASS. Basic and acidic residues predominate over residues 538–552; that stretch reads KPYEEGMRKLLKFLE. Composition is skewed to low complexity over residues 563–574 and 609–619; these read SVSGMSSESSRS and SSNSSTGSATS. Residue asparagine 611 is glycosylated (N-linked (GlcNAc...) asparagine). Over residues 654–665 the composition is skewed to gly residues; that stretch reads GFNGPEGVGENN. Positions 677 to 701 are enriched in low complexity; it reads GSKSDSGSHNLSSGSGSRSNVSTGG. Asparagine 686 and asparagine 696 each carry an N-linked (GlcNAc...) asparagine glycan. The segment covering 722–733 has biased composition (polar residues); it reads TGKTQSGSPSVA.

N-glycosylated. Detected in terminal tubule cells of the submandibular gland (at protein level). Expressed in submandibular salivary glands of 3-day-old males but not adults. Expression in adult submandibular glands is restricted to females. Isoform 5 is expressed in both 3-day-old and adult sublingual glands.

It localises to the secreted. This Mus musculus (Mouse) protein is Submandibular gland protein C (Muc19).